Here is a 95-residue protein sequence, read N- to C-terminus: Large ribosomal subunit protein bL28 (95 aa).

The protein belongs to the bacterial ribosomal protein bL28 family.

In Dinoroseobacter shibae (strain DSM 16493 / NCIMB 14021 / DFL 12), this protein is Large ribosomal subunit protein bL28.